Here is a 199-residue protein sequence, read N- to C-terminus: MKHLVLASGNAGKLEELRAMLAGLPLRIVAQGELGVDDVPETGLTFVENALIKARHASAVTGLPALADDSGLIVDALDGAPGLYSARYAGSPTNALANNAKLLDAMRGVPAERRSARFYAVIVLLRHPEDPQPLIAEGSWEGTITTEPRGDGGFGYNPVFLDPVYGLTAAEMDSALKNRLSHRAVALATLQHKLHALSL.

8–13 (SGNAGK) is a binding site for substrate. Asp69 functions as the Proton acceptor in the catalytic mechanism. Residue Asp69 coordinates Mg(2+). Residues Ser70, 154 to 157 (FGYN), Lys177, and 182 to 183 (HR) contribute to the substrate site.

It belongs to the HAM1 NTPase family. As to quaternary structure, homodimer. Requires Mg(2+) as cofactor.

The catalysed reaction is XTP + H2O = XMP + diphosphate + H(+). It catalyses the reaction dITP + H2O = dIMP + diphosphate + H(+). The enzyme catalyses ITP + H2O = IMP + diphosphate + H(+). In terms of biological role, pyrophosphatase that catalyzes the hydrolysis of nucleoside triphosphates to their monophosphate derivatives, with a high preference for the non-canonical purine nucleotides XTP (xanthosine triphosphate), dITP (deoxyinosine triphosphate) and ITP. Seems to function as a house-cleaning enzyme that removes non-canonical purine nucleotides from the nucleotide pool, thus preventing their incorporation into DNA/RNA and avoiding chromosomal lesions. This is dITP/XTP pyrophosphatase from Xanthomonas oryzae pv. oryzae (strain KACC10331 / KXO85).